The sequence spans 269 residues: Homocitrate synthase subunit alpha (269 aa).

Positions 3–255 (INIVDTTLRD…IYTGDFEDII (253 aa)) constitute a Pyruvate carboxyltransferase domain.

Belongs to the alpha-IPM synthase/homocitrate synthase family. As to quaternary structure, heterodimer of an alpha and an omega chain.

The enzyme catalyses acetyl-CoA + 2-oxoglutarate + H2O = (2R)-homocitrate + CoA + H(+). Functionally, this protein is a Fe-Mo-cofactor biosynthetic component. This chain is Homocitrate synthase subunit alpha (nifV-ALPHA), found in Clostridium pasteurianum.